The sequence spans 254 residues: Small ribosomal subunit protein uS3 (254 aa).

The 69-residue stretch at 38–106 (IRKYVLARIP…DVQINIFEIK (69 aa)) folds into the KH type-2 domain. A compositionally biased stretch (low complexity) spans 215–238 (NVGNAASGASSSSNNDNASPNQGG). The disordered stretch occupies residues 215–254 (NVGNAASGASSSSNNDNASPNQGGPRRKRGGEGNRKKSNK). The span at 244–254 (GGEGNRKKSNK) shows a compositional bias: basic and acidic residues.

The protein belongs to the universal ribosomal protein uS3 family. Part of the 30S ribosomal subunit. Forms a tight complex with proteins S10 and S14.

Binds the lower part of the 30S subunit head. Binds mRNA in the 70S ribosome, positioning it for translation. The protein is Small ribosomal subunit protein uS3 of Cytophaga hutchinsonii (strain ATCC 33406 / DSM 1761 / CIP 103989 / NBRC 15051 / NCIMB 9469 / D465).